The sequence spans 229 residues: Flagellar L-ring protein (229 aa).

The N-terminal stretch at 1–25 (MKQVRLPSSATVRAACAVAVAALAG) is a signal peptide. C26 carries the N-palmitoyl cysteine lipid modification. A lipid anchor (S-diacylglycerol cysteine) is attached at C26.

This sequence belongs to the FlgH family. The basal body constitutes a major portion of the flagellar organelle and consists of four rings (L,P,S, and M) mounted on a central rod.

Its subcellular location is the cell outer membrane. The protein resides in the bacterial flagellum basal body. In terms of biological role, assembles around the rod to form the L-ring and probably protects the motor/basal body from shearing forces during rotation. The polypeptide is Flagellar L-ring protein (Burkholderia orbicola (strain AU 1054)).